The sequence spans 216 residues: UPF0502 protein VPA1223 (216 aa).

This sequence belongs to the UPF0502 family.

The chain is UPF0502 protein VPA1223 from Vibrio parahaemolyticus serotype O3:K6 (strain RIMD 2210633).